The following is a 198-amino-acid chain: GTP cyclohydrolase-2 (198 aa).

A GTP-binding site is contributed by R52–E56. The Zn(2+) site is built by C57, C68, and C70. GTP contacts are provided by residues Q73, E94–R96, and T116. D128 acts as the Proton acceptor in catalysis. R130 functions as the Nucleophile in the catalytic mechanism. Residues T151 and K156 each coordinate GTP.

It belongs to the GTP cyclohydrolase II family. The cofactor is Zn(2+).

It catalyses the reaction GTP + 4 H2O = 2,5-diamino-6-hydroxy-4-(5-phosphoribosylamino)-pyrimidine + formate + 2 phosphate + 3 H(+). It functions in the pathway cofactor biosynthesis; riboflavin biosynthesis; 5-amino-6-(D-ribitylamino)uracil from GTP: step 1/4. Its function is as follows. Catalyzes the conversion of GTP to 2,5-diamino-6-ribosylamino-4(3H)-pyrimidinone 5'-phosphate (DARP), formate and pyrophosphate. This Vibrio parahaemolyticus serotype O3:K6 (strain RIMD 2210633) protein is GTP cyclohydrolase-2.